Consider the following 122-residue polypeptide: Large ribosomal subunit protein uL14c (122 aa).

Belongs to the universal ribosomal protein uL14 family. As to quaternary structure, part of the 50S ribosomal subunit.

The protein localises to the plastid. The protein resides in the chloroplast. Binds to 23S rRNA. In Dioscorea elephantipes (Elephant's foot yam), this protein is Large ribosomal subunit protein uL14c.